The following is a 5255-amino-acid chain: MGIVATVLLWVVTEAARGRWCERTEQVTEEEVVMPRREDVVPCPSMYQYSLAGWRIDLNRMRQVYGGERGVPPTSTHPGAAMCYIYRPPETQLVVRNRTVRACCAGWSGPHCTEVEGSLGQCHASWQCQDALGAHNLSTVSMAECCRQPWGHSWRNGSSALCFACSRQPLTGDVPLPTAPRGPAARHRGPTASCTVWAGSRYRSFDGRHFGFQGECAYSLAASTDSTWAVSITPGSPPVLHMTFGLDTVVAQGHNISVNGVAVPEGRQHLHGGISVTWLGDFVAVESGLGVHLKLDGRGTVYVTVSAELRGSTKGLCGPYNDDPIDDFLRVEGDVAPLAASFGNSWRIPDANPELSCSDAVEPSPGCAMGSTAQRAAEAMCGMLLTDPFRQCHEAVDPHGFYEACLELHCREGGTGPSPPPAVCDTLATYVRDCAQRRAYIEWRRPGLCEQQCGHGQRYSDCVSSCPASCMAAGTAEEGHCRDDCASGCECTPGLLLDRGACIPQSACPCLHRGHIYAPGQSIRQRCNQCTCRGGRWLCTQDRCAAECAVLGDLHYITFDRRRFSFPGACEYTLVQDFVEGTLRITAEQEACGGHQPLSCLRALSITVPGASARLHSTGEVVVDGRVVPLPFASAALTVRRASSSFLLLQTFGAHLLWGLETPAAYITLQPAFANKVRGLCGTYNWDQRDDFATPAGDVEVGVTAFANKYRVSTDCPVLSPVPFEPCSTYAPRRELAAAACAILHGASFQPCHHLVDREPFHQLCLYDVCACPAGKHCLCPALAAYARECAQEGAALSWRNESFCGTQCRGGQVYQECSSPCGRTCADLRLDGASSCPSLDNICVSGCNCPEGPVLDDGGQCVPPGVCPCQHSSQLYPAGSKIRQGCNACMCTAGTWSCTDAPCPDAAFCPGDLVYVFGSCLRTCDSAEPNGTCTGIADGCVCPPGTVFLDERCVPPEECPCQHNGRLYHPNDTIVRDCNTCVCRQQRWQCSSEDCMGTCVATGDPHYITFDGRAFSFLGDCEYVLVREANGLFTVTAENVPCGTSGVTCTKSVVVEMGNTVVHMLRGRDVTVNGVSVRPPKVYSGNGLTLQRAGIFLLLLSRLGLAVLWDGGTRVYIRLQPQHRGRVVGLCGNFDRDAENDLASQQGVLEPTAELFGNSWRVSLLCPEVDGTTAQHPCTDNPHRATWARKRCSILTQRLFAPCHDEVPCQHFYDWCIFDACGCDSGGDCECLCTAIATYAEECSQRGIHIRWRSQDLCPMQCDGGQEYSACGPPCPQTCRNLGLELPEHCDTMSCLEGCFCPEGKVLHEGSCIDPAECPCFWQGIAFPDSAVVQQGCRNCSCTAGLWQCVPTAEPCPAQPHCPDSEFPCRSGGRCVPGAWLCDNEDDCGDGSDEVCALHCAPHQHRCADGQCVPWGARCDGLSDCGDGSDERGCPPPPCAPPEFRCASGRCIPRAHVCNGELDCGFADDSDEAGCSPSCSVGEFQCAAGRCVPYPHRCNGHDDCGDFSDERGCVCPAGHFQCPDAQCLPPAALCDGMQDCGDGTDEAFCPDRITCAPGQLPCPDGSCVSQVKLCDGIWDCRDGWDESSVRCMVSWAPPAPTQLPTVPANGTAAPVCGPYEFPCRSGQCVPRGWVCDSEADCPDNSDELGCNRSCVLGHFPCALGAHCIHYDHLCDGIPHCPDHSDESDDNCGSTQIPPCPGHFVCNNRVCVNATRVCDGALDCPQGEDELACEGYVPTGERNQTVGPCAEYSCRDGDCITFKQVCNGLPDCRDGDMASGWLPSDEWDCGQWGPWAPWGICSHSCGLGQQLRARECSQRTPGVLHQCHGEATQARPCFSTACPVDGAWSEWTMWSNCTQGCEGVVVRQRHCQPPRDGGRPCAALPATAHATLEIGTCQQDGCPPASCPGGLQPRPCAPCPASCADLASRAPCRREQCTPGCWCAEGLVLDGERGCVRPRECRCEVDGLRYWPGQRMKLNCRLCTCLDGQPRRCRHNPACSVSCSWSAWSPWGECLGPCGVQSIQWSFRSPSHPGKHGTNRQCRGIYRKARRCQTEPCQECEHQGRSRAQGDRWRWGPCHVCQCLPGPEVRCSPYCARSAVGCPQGQVLVEGKGDSCCFCAQIGDNVTAIPTALTMEPPSTMPGEPSDSPLPTFPLPSPGDPCYSPLGIASLPDSSFTASAEQQQHPARAARLHHVSPGLELQGWAPPADTVPGLPSHLPFLQLDLLQTTNLTGVVVQGAGAGDAFITAFQLQFSTDGNRWHNYQQLFQGNWDATTPVVQPLDHMVQARYIRILPQGFHNAIFLRAELLGCPTVPLDLAVTTAVTPAPCGTGEFWCGVSCVTASRRCDGATDCPGGADEAGCEPPSSTTLPTHPASLTTPGSAGILGLTAEPPVAPPAAVPEGTSAWLTVGSTSPAVPSTTGLPGVPTATITPRGPPSAGPPSPGMAAVTVSHPVMGPPALPMPPTGVPTPTSAEPPLPRLLCPPDQFLCDALGCVDAAMVCDGQQDCLDGSDEAHCGALPTSGSSPSPLAWPSSPPPTCSPKQFSCGTGECLALEKRCDLSRDCADGSDESSCADCILSPWGGWSQCSHSCGLGVTSRQRVLLRGALPGGTCHTPRLDTRACFLRACPVPGAWAAWGVWSSCDAECGGGMRSRTRSCTDPPPKNGGQPCAGEALQSQPCNLQPCGDTRECGPGMVLVQEGDCVQGLVPPCPQVCGDLSATSSCQSPCQEGCRCPPGLFLQEGTCVNASQCHCHQGQQRWLPSQVFLRDGCSQCVCRDGVVTCEDTACPIACAWSAWSLWTLCDRSCGVGMQERFRSPSNPAAANGGAPCDGDTREVRECHTPCATAEPSSGWSSWTPWSPCSRSCFHHVDQRGRRHRFRHCEGMGTCPGLGVQEEPCDTAPCPVAGVWMPWSAWSECSAPCDAGVQTRSRTCTPPAFGGAECTGPHLQTRNCNTRPCGAQCPDTMQYLTAEECRHSEGRCPWICQDLGAGVACTAQCQPGCHCPAGLLLQNGTCVPPSHCLCHHRGHLYQPGDINALDTCNNCTCVTGQMVCSTETCPVPCTWSNWTAWSTCSHSCDVGMRRRYRVPIVPPLAGGGPPCQGPSMEVEFCSLQPCRAVAPWGPWSECSVSCGGGYRNRTRDGPPLHSLEFSTCNPAPCPGKEPGVCPPGKQWQACAQGAASCAELSAAPPADGSCHPGCYCPPGALLLNNECVAEAACPCAVDGVLYQPGDVVPQGCHNCSCIAGRVTNCSQEDCGDVDGPWTPWTPWSECSASCGPGRQRRYRFCSAHPGVPCAEPQPQERPCARQPCHSPDCAAVPGSVFSHCRPPCPRSCDDISHCVWHRQPGCYCTNGTLLDATGTACVALENCTCLDAHSGQRHQPGQSVPRGDGCNNCTCTQGRLLCTGLPCPVPGAWCEWSPWTPCSRSCGDEAATRHRVCSCPAPQQGGAGCPGGLEGHGDTGMQLQHQECPSVPPCPEDGAWAAWGPWSGCGGCGGQAVRTRSCSSPPARFGGLPCAGEARQSRACPWATSSCPECAGGLVAFTCGKPCPHSCEDLREDTACMATPRCLPACACPHGQLLQDGDCVPPELCRCAWAPSKNGSIWEQDGAVPMQELQPGETVQRHCQNCTCKSGTLQCHAEPGCRADGGWSPWGPWSPCSPGCQAGTQLASRQCNNPTPQLGGRGCSGHSQRQRPCPATEGCPEEEPWGEWSPWGPCSASCGGGEQLRHRDCPPPGGCPGLALQSKTCNTHVCREAGCPPGRLYRECQQGEGCPYSCAHLAGRIACFPGGCQEGCHCPTGTLLHHGHCLQECPCVLTAEVLRKLRNSSADLQAAPHLLGTRGPPLALDQELPPGSTIHSACTSCTCLHGRLNCSEPVCPRDGGFSPWGPWSSCSRSCGGLGVMTRRRGCTNPEPARGGRDCAGPRSDSKYCQSPECPAVPTTEPGPGVAGAEEEEGFGPWSPWSPCSKTCTHPERPATKTRERPCVGTAVCSGDGFQEQPCNLPLCSDVPPCQGEDCAGLNCSWAPWGPWTECSRSCGVGRQQRLRAYSPPGASGRWCPGILSAFVQRRFCSLQACKVDGAWSAWSPWSRCDRTCGGGRAVRTRSCTRPPPKNGGQRCPGERHQLHLCNAQPCDDSCPPGMALVTCANHCPRHCGDLQEGIVCREEEHCEPGCRCPNGTLEQDGGCVPLAHCECTDAQGHGWVPGSTHHDGCNNCTCLEGRLRCTDRLCPPLRCPWSRWSRWSPCSVTCGDGQQTRFRTPTAGSWDEECQGEQMENRGCAAGPCPPLCPQGSWERRLGDMWLQGECQRCTCTPEGTVCEDTTCAGAEHCTWGTWSPCSRSCGTGLASREGSCPCPFPGPPGAVCNASTGDGARPHREVQACYLRPCPAECSWSAWSSWGGCSCSSPLQHRYRHRHGTGLCVGLDVELHPCNTSGCSESSCEPPFEFQPCSPPCARLCSTLQHPELCPAQSHCLPGCFCPQGLLEQRSACVPPEQCDCLHTNESGDLVTLSPGDIILLGCKECVCQDGALQCSSEGCQGLLPLSPWSEWTPCSTCLPLFPSHLGDATPHVSVQHRYRACLDPQSGQPWSGDTAVCSAELQQQRLCPDPDICQELCLWSPWGPWGPCQQPCSGSFRLRHRHLQRLAGSGQCQGAQTQSESCNTAVCPGEDCEKQGRVFATTCANSCPRACADLWQHVECVQGGCKPGCRCPQGQLLQDGLCVPTAQCRCGLSGDNGTQELWPGQEATIECHNCTCENGTMVCPALPCPSYGPWSTWSPCSSSCGSGRTSRHRTCEPNPGGVPCMASGMQETAECSPQPCPAGCQLSPWSPWSPCSSSCGGGRSERSRELLGGEEEPCPIPALRQHRVCNVHNCTQECPRSQVHRECANACPHACADLRPQTQCLPQPCQPGCACPPGQVLQDGACVPPEECRCTLDSTMPGVLNLSREEQEQEHAPGSRLQHRCNTCICIRGTFNCSQEECNVDCLWSPWSPWSPCSVTCGMGERLSHRHPLRQRLYEGAECLGPPVRRAACHLPDCACPEGERWQGHEVPPGCEQSCRDILDETPANCTPSPSPGCTCEPGHYRNSSGHCVPSTLCECLHQGQLHQPGSEWQEQCARCRCVDGKANCTDGCTPLSCPEGEVKVREPGRCCPVCRMEWPEEPSSMCRRFTELRNITKGPCSLPNVEVSFCSGRCPSRTAVTPEEPYLQTLCECCSYRLDPGSPVRILSLPCAGGAAEPVVLPIIHSCECSSCQGGDFSKR.

The first 18 residues, Met-1–Gly-18, serve as a signal peptide directing secretion. Residues Arg-19–His-111 enclose the EMI domain. N-linked (GlcNAc...) asparagine glycosylation is found at Asn-97, Asn-136, Asn-156, and Asn-255. A VWFD 1 domain is found at Ala-192 to Ser-358. 2 cysteine pairs are disulfide-bonded: Cys-194–Cys-317 and Cys-216–Cys-357. Residues Cys-453 to Cys-508 form the TIL 1 domain. Residues Cys-508–Leu-601 enclose the VWFC 1 domain. The VWFD 2 domain occupies Ala-546 to Pro-717. 3 cysteine pairs are disulfide-bonded: Cys-548-Cys-681, Cys-570-Cys-716, and Cys-592-Cys-600. Asn-801 carries N-linked (GlcNAc...) asparagine glycosylation. The TIL 2 domain occupies Cys-809–Cys-868. The VWFC 2 domain occupies Cys-868 to Asp-926. N-linked (GlcNAc...) asparagine glycosylation is found at Asn-931 and Asn-972. Residues Gly-998 to Pro-1168 form the VWFD 3 domain. Intrachain disulfides connect Cys-1000/Cys-1132, Cys-1022/Cys-1167, and Cys-1043/Cys-1050. The TIL 3 domain occupies Cys-1263–Cys-1319. The N-linked (GlcNAc...) asparagine glycan is linked to Asn-1340. 6 consecutive LDL-receptor class A domains span residues His-1362 to Ala-1398, His-1400 to Pro-1436, Pro-1439 to Ser-1477, Ser-1479 to Val-1515, Val-1515 to Pro-1551, and Thr-1555 to Met-1593. Intrachain disulfides connect Cys-1363/Cys-1376, Cys-1370/Cys-1389, Cys-1383/Cys-1397, Cys-1401/Cys-1413, Cys-1408/Cys-1426, Cys-1420/Cys-1435, Cys-1440/Cys-1452, Cys-1447/Cys-1465, Cys-1459/Cys-1476, Cys-1480/Cys-1492, Cys-1487/Cys-1505, Cys-1499/Cys-1514, Cys-1516/Cys-1528, Cys-1523/Cys-1541, Cys-1535/Cys-1550, Cys-1556/Cys-1568, Cys-1563/Cys-1581, and Cys-1575/Cys-1592. Asn-1610 carries N-linked (GlcNAc...) asparagine glycosylation. LDL-receptor class A domains follow at residues Val-1616–Asn-1652, Ser-1654–Gly-1693, and Pro-1699–Glu-1734. Intrachain disulfides connect Cys-1617–Cys-1629, Cys-1624–Cys-1642, and Cys-1636–Cys-1651. Asn-1652 carries an N-linked (GlcNAc...) asparagine glycan. 6 disulfides stabilise this stretch: Cys-1655/Cys-1668, Cys-1662/Cys-1681, Cys-1675/Cys-1692, Cys-1700/Cys-1711, Cys-1706/Cys-1724, and Cys-1718/Cys-1733. Asn-1713 is a glycosylation site (N-linked (GlcNAc...) asparagine). The N-linked (GlcNAc...) asparagine glycan is linked to Asn-1743. The LDL-receptor class A 10 domain maps to Pro-1748–Gly-1790. Intrachain disulfides connect Cys-1749–Cys-1759, Cys-1754–Cys-1772, Cys-1766–Cys-1789, Cys-1801–Cys-1837, Cys-1805–Cys-1842, and Cys-1816–Cys-1827. 2 consecutive TSP type-1 domains span residues Cys-1789–Pro-1843 and Asp-1845–Pro-1903. Asn-1856 carries N-linked (GlcNAc...) asparagine glycosylation. Cystine bridges form between Cys-1857–Cys-1897, Cys-1861–Cys-1902, and Cys-1871–Cys-1881. The region spanning Cys-1907 to Cys-1961 is the TIL 4 domain. 2 consecutive EGF-like domains span residues Cys-1919–Val-1956 and Arg-1957–Cys-1983. One can recognise a VWFC 3 domain in the interval Cys-1961–Gly-2019. The region spanning Ser-2002–Gln-2058 is the TSP type-1 3 domain. 3 disulfides stabilise this stretch: Cys-2003–Cys-2042, Cys-2014–Cys-2018, and Cys-2052–Cys-2057. The 63-residue stretch at Gln-2058–Ala-2120 folds into the VWFC 4 domain. Asn-2125 and Asn-2230 each carry an N-linked (GlcNAc...) asparagine glycan. 4 disulfide bridges follow: Cys-2162–Cys-2310, Cys-2328–Cys-2339, Cys-2335–Cys-2352, and Cys-2346–Cys-2361. The F5/8 type C domain occupies Cys-2162–Cys-2310. Residues Pro-2327–Glu-2362 enclose the LDL-receptor class A 11 domain. Residues Cys-2352–Pro-2373 form a disordered region. The span at Pro-2364–Pro-2373 shows a compositional bias: polar residues. LDL-receptor class A domains lie at Leu-2481–Gly-2517 and Thr-2538–Ala-2574. 12 cysteine pairs are disulfide-bonded: Cys-2482–Cys-2494, Cys-2489–Cys-2507, Cys-2501–Cys-2516, Cys-2539–Cys-2551, Cys-2546–Cys-2564, Cys-2558–Cys-2573, Cys-2576–Cys-2612, Cys-2587–Cys-2591, Cys-2622–Cys-2627, Cys-2642–Cys-2679, Cys-2646–Cys-2684, and Cys-2657–Cys-2669. 2 consecutive TSP type-1 domains span residues Asp-2575–Pro-2628 and Pro-2630–Gly-2685. The region spanning Pro-2708 to Cys-2750 is the TIL 5 domain. The N-linked (GlcNAc...) asparagine glycan is linked to Asn-2746. TSP type-1 domains are found at residues Ala-2790 to Ala-2844, Ser-2849 to Pro-2903, and Ala-2905 to Gly-2958. 9 disulfides stabilise this stretch: Cys-2791/Cys-2829, Cys-2802/Cys-2806, Cys-2839/Cys-2843, Cys-2861/Cys-2897, Cys-2865/Cys-2902, Cys-2881/Cys-2887, Cys-2917/Cys-2952, Cys-2921/Cys-2957, and Cys-2932/Cys-2942. One can recognise a TIL 6 domain in the interval Glu-2971–Cys-3020. Residues Asn-3011, Asn-3042, and Asn-3065 are each glycosylated (N-linked (GlcNAc...) asparagine). The VWFC 5 domain maps to Cys-3020–Asp-3077. 2 TSP type-1 domains span residues Pro-3060–Arg-3115 and Val-3117–Pro-3158. 3 disulfide bridges follow: Cys-3061–Cys-3099, Cys-3072–Cys-3076, and Cys-3109–Cys-3114. Asn-3136 carries an N-linked (GlcNAc...) asparagine glycan. One can recognise a TIL 7 domain in the interval Cys-3165–Cys-3217. The VWFC 6 domain maps to Cys-3217–Gly-3275. Residues Asn-3238 and Asn-3248 are each glycosylated (N-linked (GlcNAc...) asparagine). In terms of domain architecture, TSP type-1 11 spans Asp-3258–His-3309. 3 disulfide bridges follow: Cys-3270-Cys-3303, Cys-3274-Cys-3308, and Cys-3285-Cys-3293. Residues Asn-3350, Asn-3366, and Asn-3392 are each glycosylated (N-linked (GlcNAc...) asparagine). TSP type-1 domains lie at Pro-3410 to Pro-3475 and Asp-3477 to Pro-3532. 6 cysteine pairs are disulfide-bonded: Cys-3422-Cys-3468, Cys-3426-Cys-3474, Cys-3437-Cys-3449, Cys-3489-Cys-3524, Cys-3492-Cys-3531, and Cys-3502-Cys-3514. The 56-residue stretch at Cys-3534–Cys-3589 folds into the TIL 8 domain. N-linked (GlcNAc...) asparagine glycans are attached at residues Asn-3598 and Asn-3625. TSP type-1 domains lie at Asp-3644–Pro-3700 and Glu-3702–Arg-3751. 6 cysteine pairs are disulfide-bonded: Cys-3656/Cys-3693, Cys-3660/Cys-3699, Cys-3671/Cys-3683, Cys-3714/Cys-3745, Cys-3718/Cys-3750, and Cys-3729/Cys-3735. Asn-3823 and Asn-3869 each carry an N-linked (GlcNAc...) asparagine glycan. 4 consecutive TSP type-1 domains span residues Asp-3878–Pro-3934, Glu-3951–Ser-4004, Asn-4018–Lys-4074, and Asp-4076–Asp-4131. Disulfide bonds link Cys-3890–Cys-3928, Cys-3894–Cys-3933, Cys-3906–Cys-3918, Cys-3963–Cys-3998, Cys-3967–Cys-4003, and Cys-3982–Cys-3988. The interval Glu-3932–Glu-3951 is disordered. N-linked (GlcNAc...) asparagine glycosylation is present at Asn-4018. 6 cysteine pairs are disulfide-bonded: Cys-4019–Cys-4055, Cys-4030–Cys-4034, Cys-4068–Cys-4073, Cys-4088–Cys-4125, Cys-4092–Cys-4130, and Cys-4103–Cys-4115. Positions Cys-4134–Cys-4189 constitute a TIL 9 domain. N-linked (GlcNAc...) asparagine glycosylation is found at Asn-4174 and Asn-4211. 3 consecutive TSP type-1 domains span residues Arg-4230 to Pro-4282, Gly-4322 to Pro-4384, and Glu-4386 to Ser-4433. 3 disulfides stabilise this stretch: Cys-4231/Cys-4266, Cys-4242/Cys-4246, and Cys-4276/Cys-4281. Asn-4362 carries N-linked (GlcNAc...) asparagine glycosylation. Intrachain disulfides connect Cys-4387–Cys-4417, Cys-4398–Cys-4400, and Cys-4427–Cys-4432. N-linked (GlcNAc...) asparagine glycosylation is present at Asn-4428. Residues Cys-4437–Cys-4492 enclose the TIL 10 domain. Residue Asn-4498 is glycosylated (N-linked (GlcNAc...) asparagine). 2 consecutive TSP type-1 domains span residues Leu-4537–Gln-4608 and Leu-4610–Pro-4662. Intrachain disulfides connect Cys-4548/Cys-4601, Cys-4551/Cys-4607, Cys-4575/Cys-4591, Cys-4611/Cys-4646, Cys-4622/Cys-4626, and Cys-4656/Cys-4661. In terms of domain architecture, TIL 11 spans Thr-4675 to Cys-4722. Asn-4730, Asn-4747, and Asn-4752 each carry an N-linked (GlcNAc...) asparagine glycan. 2 TSP type-1 domains span residues Cys-4762–Pro-4815 and Gly-4817–Thr-4869. 6 disulfide bridges follow: Cys-4774–Cys-4809, Cys-4778–Cys-4814, Cys-4789–Cys-4798, Cys-4818–Cys-4852, Cys-4829–Cys-4833, and Cys-4863–Cys-4868. A glycan (N-linked (GlcNAc...) asparagine) is linked at Asn-4867. One can recognise a TIL 12 domain in the interval Cys-4872–Cys-4926. Asn-4939 and Asn-4970 each carry an N-linked (GlcNAc...) asparagine glycan. In terms of domain architecture, TSP type-1 27 spans Asp-4979–Ala-5033. 3 disulfide bridges follow: Cys-4980-Cys-5017, Cys-4991-Cys-4995, and Cys-5027-Cys-5032. N-linked (GlcNAc...) asparagine glycosylation is found at Asn-5081, Asn-5122, and Asn-5169. The 59-residue stretch at Cys-5092–Arg-5150 folds into the VWFC 7 domain. 4 cysteine pairs are disulfide-bonded: Cys-5161-Cys-5209, Cys-5175-Cys-5226, Cys-5185-Cys-5242, and Cys-5189-Cys-5244. Residues Cys-5161–Gln-5248 form the CTCK domain.

This sequence belongs to the thrombospondin family.

The protein localises to the secreted. Its subcellular location is the extracellular space. In terms of biological role, involved in the modulation of neuronal aggregation. May be involved in developmental events during the formation of the central nervous system. The sequence is that of SCO-spondin (SSPO) from Gallus gallus (Chicken).